The following is a 213-amino-acid chain: Transcriptional regulatory protein CrdR (213 aa).

A Response regulatory domain is found at 4-119; that stretch reads KIFLLEDDYL…ELEARIKRFF (116 aa). Asp53 is subject to 4-aspartylphosphate. The segment at residues 121 to 212 is a DNA-binding region (ompR/PhoB-type); it reads DDPIEIMPNI…HKGVGYRFNP (92 aa).

Phosphorylated by CrdS.

Functionally, member of the two-component regulatory system CrdR/CrdS that induces the transcriptional induction of the copper resistance determinant CrdA. Upon phosphorylation by CrdS, functions as a transcriptional regulator by direct binding to promoter regions of target genes including the crdA promoter or nitric oxide-responsive gene promoters. This Helicobacter pylori (strain ATCC 700392 / 26695) (Campylobacter pylori) protein is Transcriptional regulatory protein CrdR.